A 442-amino-acid polypeptide reads, in one-letter code: MQKAIPITAYKSSSLSGKIRIPGDKSISHRSLILGGLANGETYIHGLLESADVLNTASAMQAMGACIIKKDDFWIIRGTGNGCLLAAQKPLDFGNAGTGARLVMGMVGPYHMKTTFIGDASLSKRPMGRILDPLRLMGVEIEATHGDHLPLTLYGPKMANPIRYHVPIASSQVKSAILLAGLNTAGITTVIEPVLTRDHTEKMLKAFGATLEIERDKEGARLIHLYGHPHLTGQTIHIPGDPSSAAFLIIAALLVEDSDITIENVLINNSRIGLIETLWEMGAHIEFLNQRQTGGEDVADLRIKSSVLKGVTVPKERAPSMIDEYPALAVAAAFAEGKTVMLGIEELRVKESDRLSAVAQGLKINCVDCEEGQDFLVVYGKGSAKGLGGGYVSTHLDHRIAMCFLTFGLVSEKPVTIDDQRMIATSFPEFIPFIKQLGGKIA.

3-phosphoshikimate contacts are provided by Lys-25, Ser-26, and Arg-30. Lys-25 contacts phosphoenolpyruvate. Residues Gly-97 and Arg-125 each coordinate phosphoenolpyruvate. Residues Ser-170, Ser-171, Gln-172, Asp-323, and Lys-350 each contribute to the 3-phosphoshikimate site. Gln-172 contacts phosphoenolpyruvate. Asp-323 acts as the Proton acceptor in catalysis. Arg-354 and Arg-399 together coordinate phosphoenolpyruvate.

This sequence belongs to the EPSP synthase family. In terms of assembly, monomer.

It is found in the cytoplasm. The catalysed reaction is 3-phosphoshikimate + phosphoenolpyruvate = 5-O-(1-carboxyvinyl)-3-phosphoshikimate + phosphate. It functions in the pathway metabolic intermediate biosynthesis; chorismate biosynthesis; chorismate from D-erythrose 4-phosphate and phosphoenolpyruvate: step 6/7. In terms of biological role, catalyzes the transfer of the enolpyruvyl moiety of phosphoenolpyruvate (PEP) to the 5-hydroxyl of shikimate-3-phosphate (S3P) to produce enolpyruvyl shikimate-3-phosphate and inorganic phosphate. The protein is 3-phosphoshikimate 1-carboxyvinyltransferase of Bartonella tribocorum (strain CIP 105476 / IBS 506).